Consider the following 449-residue polypeptide: Transcription factor AP-2 gamma (449 aa).

Residue Lys-10 forms a Glycyl lysine isopeptide (Lys-Gly) (interchain with G-Cter in SUMO) linkage. The interval 13 to 58 (EDCEDRHDSSSNGNPRIPHLSSPGQHLYSPAPPLSHTGVAEYQPPP) is disordered. The short motif at 59-64 (YFPPPY) is the PPxY motif element. The interval 94–130 (AATGSQQQAWPGRQSQEGSSLASHHSRSASLIPHISG) is disordered. The span at 95–111 (ATGSQQQAWPGRQSQEG) shows a compositional bias: polar residues. Over residues 112 to 124 (SSLASHHSRSASL) the composition is skewed to low complexity. The residue at position 251 (Ser-251) is a Phosphoserine; by PKA. The interval 292–423 (RRKAAHVTLL…YIKEALIAID (132 aa)) is H-S-H (helix-span-helix), dimerization. A disordered region spans residues 426–449 (YMNPGDQSPADSSKTMEKMEKHRK). Ser-433 bears the Phosphoserine mark. The segment covering 439–449 (KTMEKMEKHRK) has biased composition (basic and acidic residues).

The protein belongs to the AP-2 family. As to quaternary structure, binds DNA as a dimer. Can form homodimers or heterodimers with other AP-2 family members. Interacts with WWOX. Interacts with UBE2I. Interacts with KCTD1; this interaction represses transcription activation. Interacts with CITED2 (via C-terminus); the interaction stimulates TFAP2B-transcriptional activity. Interacts with CITED4. Interacts with MTA1. Sumoylated on Lys-10; which inhibits transcriptional activity. In terms of tissue distribution, expressed in lung, ovary and testis. Expressed in most squamous epithelia. Also, detected in several exocrine glands including the prostate, the preputial and salivary glands, serous glands of the tongue and ocular harderian glands.

It is found in the nucleus. In terms of biological role, sequence-specific DNA-binding transcription factor that interacts with cellular enhancer elements to regulate transcription of selected genes, and which plays a key role in early embryonic development. AP-2 factors bind to the consensus sequence 5'-GCCNNNGGC-3' and activate genes involved in a large spectrum of important biological functions. TFAP2C plays a key role in early embryonic development by regulating both inner cell mass (ICM) and trophectoderm differentiation. At the 8-cell stage, during morula development, controls expression of cell-polarity genes. Upon trophoblast commitment, binds to late trophectoderm genes in blastocysts together with CDX2, and later to extra-embryonic ectoderm genes together with SOX2. Binds to both closed and open chromatin with other transcription factors. The sequence is that of Transcription factor AP-2 gamma from Mus musculus (Mouse).